A 169-amino-acid chain; its full sequence is Transcription antitermination protein NusB (169 aa).

A disordered region spans residues 1–23; the sequence is MADSKKPAIKKPVPKGDRKANRR.

The protein belongs to the NusB family.

In terms of biological role, involved in transcription antitermination. Required for transcription of ribosomal RNA (rRNA) genes. Binds specifically to the boxA antiterminator sequence of the ribosomal RNA (rrn) operons. In Rhodopseudomonas palustris (strain HaA2), this protein is Transcription antitermination protein NusB.